A 325-amino-acid chain; its full sequence is Lipid droplet-associated hydrolase (325 aa).

Ser139 functions as the Nucleophile in the catalytic mechanism. Residues Asp271 and His300 each act as charge relay system in the active site.

This sequence belongs to the AB hydrolase superfamily. LDAH family. As to expression, present in macrophage-rich areas in atherosclerotic lesions (at protein level). Expressed in monocytes and monocyte-derived macrophages (at protein level).

The protein resides in the lipid droplet. It is found in the endoplasmic reticulum. The catalysed reaction is a cholesterol ester + H2O = cholesterol + a fatty acid + H(+). Functionally, probable serine lipid hydrolase associated with lipid droplets. Has low cholesterol esterase activity. Appears to lack triglyceride lipase activity. Involved in cholesterol and triglyceride homeostasis; has opposing effects, stimulating cellular triglyceride accumulation and cellular cholesterol release. Acts antagonistically with PNPLA2/ATGL in regulation of cellular lipid stores. May regulate triglyceride accumulation indirectly through stimulation of PNPLA2/ATGL ubiquitination and proteasomal degradation. Promotes microtubule-dependent lipid droplet fusion. Highly expressed in macrophage-rich areas in atherosclerotic lesions, suggesting that it could promote cholesterol ester turnover in macrophages. The chain is Lipid droplet-associated hydrolase from Homo sapiens (Human).